A 511-amino-acid chain; its full sequence is Lysine--tRNA ligase (511 aa).

Residues 1 to 21 form a disordered region; that stretch reads MHTEKDPNKNTPEQQTPISLN. Polar residues predominate over residues 9–21; that stretch reads KNTPEQQTPISLN. Mg(2+) is bound by residues Glu422 and Glu429.

The protein belongs to the class-II aminoacyl-tRNA synthetase family. As to quaternary structure, homodimer. Mg(2+) is required as a cofactor.

Its subcellular location is the cytoplasm. It carries out the reaction tRNA(Lys) + L-lysine + ATP = L-lysyl-tRNA(Lys) + AMP + diphosphate. The protein is Lysine--tRNA ligase of Pelodictyon phaeoclathratiforme (strain DSM 5477 / BU-1).